Consider the following 684-residue polypeptide: DNA-directed RNA polymerase subunit beta' (684 aa).

4 residues coordinate Zn(2+): Cys-69, Cys-71, Cys-87, and Cys-90. Mg(2+) contacts are provided by Asp-489, Asp-491, and Asp-493.

The protein belongs to the RNA polymerase beta' chain family. RpoC1 subfamily. In terms of assembly, in plastids the minimal PEP RNA polymerase catalytic core is composed of four subunits: alpha, beta, beta', and beta''. When a (nuclear-encoded) sigma factor is associated with the core the holoenzyme is formed, which can initiate transcription. The cofactor is Mg(2+). Requires Zn(2+) as cofactor.

The protein localises to the plastid. It localises to the chloroplast. It catalyses the reaction RNA(n) + a ribonucleoside 5'-triphosphate = RNA(n+1) + diphosphate. DNA-dependent RNA polymerase catalyzes the transcription of DNA into RNA using the four ribonucleoside triphosphates as substrates. The protein is DNA-directed RNA polymerase subunit beta' of Morus indica (Mulberry).